The sequence spans 155 residues: Transcriptional repressor NrdR (155 aa).

A zinc finger lies at 3 to 34 (CPFCSHFESKVVDSRPTDEGQAIRRRRECVSC). An ATP-cone domain is found at 49–139 (LIVVKKSGNR…VYREFKDINT (91 aa)).

Belongs to the NrdR family. Requires Zn(2+) as cofactor.

In terms of biological role, negatively regulates transcription of bacterial ribonucleotide reductase nrd genes and operons by binding to NrdR-boxes. The chain is Transcriptional repressor NrdR from Alkaliphilus metalliredigens (strain QYMF).